The primary structure comprises 85 residues: Large ribosomal subunit protein bL27 (85 aa).

Positions 1-22 are disordered; that stretch reads MAHKKGQGSTQNNRDSAGRRLG.

Belongs to the bacterial ribosomal protein bL27 family.

The chain is Large ribosomal subunit protein bL27 from Sulfurimonas denitrificans (strain ATCC 33889 / DSM 1251) (Thiomicrospira denitrificans (strain ATCC 33889 / DSM 1251)).